The sequence spans 113 residues: Biotrophy-associated secreted protein 3 (113 aa).

Positions 1–20 (MQFSTVSFAIFAILPAMVAA) are cleaved as a signal peptide.

It localises to the secreted. Secreted effector involved in biotrophic colonization of plant cells. In Pyricularia oryzae (strain 70-15 / ATCC MYA-4617 / FGSC 8958) (Rice blast fungus), this protein is Biotrophy-associated secreted protein 3.